A 267-amino-acid polypeptide reads, in one-letter code: Small ribosomal subunit protein uS2 (267 aa).

Positions 224–267 (GRQGEDQVDEKTFEGQKSEAAEGDKKTADNSMEDIVNAVEGDNK) are disordered. The span at 225-251 (RQGEDQVDEKTFEGQKSEAAEGDKKTA) shows a compositional bias: basic and acidic residues.

It belongs to the universal ribosomal protein uS2 family.

The chain is Small ribosomal subunit protein uS2 from Levilactobacillus brevis (strain ATCC 367 / BCRC 12310 / CIP 105137 / JCM 1170 / LMG 11437 / NCIMB 947 / NCTC 947) (Lactobacillus brevis).